A 463-amino-acid polypeptide reads, in one-letter code: ATP-dependent protease ATPase subunit HslU (463 aa).

ATP is bound by residues valine 21, 63–68 (GVGKTE), aspartate 276, glutamate 341, and arginine 413.

This sequence belongs to the ClpX chaperone family. HslU subfamily. A double ring-shaped homohexamer of HslV is capped on each side by a ring-shaped HslU homohexamer. The assembly of the HslU/HslV complex is dependent on binding of ATP.

The protein resides in the cytoplasm. Functionally, ATPase subunit of a proteasome-like degradation complex; this subunit has chaperone activity. The binding of ATP and its subsequent hydrolysis by HslU are essential for unfolding of protein substrates subsequently hydrolyzed by HslV. HslU recognizes the N-terminal part of its protein substrates and unfolds these before they are guided to HslV for hydrolysis. In Thermotoga petrophila (strain ATCC BAA-488 / DSM 13995 / JCM 10881 / RKU-1), this protein is ATP-dependent protease ATPase subunit HslU.